The sequence spans 108 residues: uncharacterized protein (108 aa).

Over residues 39 to 68 (GLRSRSGTGSGNSRNGLKESGGSRSGPGKP) the composition is skewed to low complexity. The interval 39–95 (GLRSRSGTGSGNSRNGLKESGGSRSGPGKPRGNRKSSRRIRPRPTSEKPRGYWRSSW) is disordered. The segment covering 69 to 80 (RGNRKSSRRIRP) has biased composition (basic residues).

This is an uncharacterized protein from Acidithiobacillus ferridurans.